The following is a 319-amino-acid chain: Sulfate adenylyltransferase subunit 2 (319 aa).

It belongs to the PAPS reductase family. CysD subfamily. In terms of assembly, heterodimer composed of CysD, the smaller subunit, and CysN.

The catalysed reaction is sulfate + ATP + H(+) = adenosine 5'-phosphosulfate + diphosphate. It functions in the pathway sulfur metabolism; hydrogen sulfide biosynthesis; sulfite from sulfate: step 1/3. Its function is as follows. With CysN forms the ATP sulfurylase (ATPS) that catalyzes the adenylation of sulfate producing adenosine 5'-phosphosulfate (APS) and diphosphate, the first enzymatic step in sulfur assimilation pathway. APS synthesis involves the formation of a high-energy phosphoric-sulfuric acid anhydride bond driven by GTP hydrolysis by CysN coupled to ATP hydrolysis by CysD. This Methylobacterium radiotolerans (strain ATCC 27329 / DSM 1819 / JCM 2831 / NBRC 15690 / NCIMB 10815 / 0-1) protein is Sulfate adenylyltransferase subunit 2.